The chain runs to 556 residues: Amidophosphoribosyltransferase (556 aa).

Residues 1-57 constitute a propeptide that is removed on maturation; it reads MCLAVGVGVRAPKHVPQIRRLGRAGRRLRCVTNCALGSCPIVTVQQPGRDFSSPREE. Catalysis depends on Cys-58, which acts as the Nucleophile. Residues 58–284 form the Glutamine amidotransferase type-2 domain; sequence CGVFGVWAPG…PGELLAIDAD (227 aa). A [4Fe-4S] cluster-binding site is contributed by Cys-299. Mg(2+) contacts are provided by Ser-346, Asp-408, and Asp-409. Positions 445, 501, and 504 each coordinate [4Fe-4S] cluster.

It in the C-terminal section; belongs to the purine/pyrimidine phosphoribosyltransferase family. It depends on Mg(2+) as a cofactor. [4Fe-4S] cluster is required as a cofactor.

It carries out the reaction 5-phospho-beta-D-ribosylamine + L-glutamate + diphosphate = 5-phospho-alpha-D-ribose 1-diphosphate + L-glutamine + H2O. It participates in purine metabolism; IMP biosynthesis via de novo pathway; N(1)-(5-phospho-D-ribosyl)glycinamide from 5-phospho-alpha-D-ribose 1-diphosphate: step 1/2. Functionally, catalyzes the formation of phosphoribosylamine from phosphoribosylpyrophosphate (PRPP) and glutamine. The protein is Amidophosphoribosyltransferase of Mycobacterium leprae (strain TN).